We begin with the raw amino-acid sequence, 113 residues long: Large ribosomal subunit protein uL22 (113 aa).

It belongs to the universal ribosomal protein uL22 family. In terms of assembly, part of the 50S ribosomal subunit.

Its function is as follows. This protein binds specifically to 23S rRNA; its binding is stimulated by other ribosomal proteins, e.g. L4, L17, and L20. It is important during the early stages of 50S assembly. It makes multiple contacts with different domains of the 23S rRNA in the assembled 50S subunit and ribosome. In terms of biological role, the globular domain of the protein is located near the polypeptide exit tunnel on the outside of the subunit, while an extended beta-hairpin is found that lines the wall of the exit tunnel in the center of the 70S ribosome. The protein is Large ribosomal subunit protein uL22 of Carboxydothermus hydrogenoformans (strain ATCC BAA-161 / DSM 6008 / Z-2901).